The following is a 380-amino-acid chain: 1-deoxy-D-xylulose 5-phosphate reductoisomerase (380 aa).

T10, G11, S12, I13, G36, R37, N38, and N120 together coordinate NADPH. Residue K121 coordinates 1-deoxy-D-xylulose 5-phosphate. Position 122 (E122) interacts with NADPH. Residue D146 participates in Mn(2+) binding. 1-deoxy-D-xylulose 5-phosphate-binding residues include S147, E148, S172, and H195. E148 is a Mn(2+) binding site. Residue G201 participates in NADPH binding. Residues S208, N213, K214, and E217 each coordinate 1-deoxy-D-xylulose 5-phosphate. Mn(2+) is bound at residue E217.

This sequence belongs to the DXR family. Mg(2+) is required as a cofactor. The cofactor is Mn(2+).

The catalysed reaction is 2-C-methyl-D-erythritol 4-phosphate + NADP(+) = 1-deoxy-D-xylulose 5-phosphate + NADPH + H(+). It participates in isoprenoid biosynthesis; isopentenyl diphosphate biosynthesis via DXP pathway; isopentenyl diphosphate from 1-deoxy-D-xylulose 5-phosphate: step 1/6. Catalyzes the NADPH-dependent rearrangement and reduction of 1-deoxy-D-xylulose-5-phosphate (DXP) to 2-C-methyl-D-erythritol 4-phosphate (MEP). The polypeptide is 1-deoxy-D-xylulose 5-phosphate reductoisomerase (Listeria monocytogenes serovar 1/2a (strain ATCC BAA-679 / EGD-e)).